Consider the following 482-residue polypeptide: Beta-1,3-glucan-binding protein 2 (482 aa).

An N-terminal signal peptide occupies residues 1–18 (MWIKSVCLFATIAGCLGQ). Positions 23 to 122 (YKVPDAKLEA…GEWTVTEFVN (100 aa)) constitute a CBM39 domain. The N-linked (GlcNAc...) asparagine glycan is linked to Asn124. Residues 127-153 (VVDTSTAPPPVAPAVSEEDQSPGPQWR) are disordered. In terms of domain architecture, GH16 spans 128 to 482 (VDTSTAPPPV…KVDYVRVYAL (355 aa)). N-linked (GlcNAc...) asparagine glycosylation is present at Asn189.

As to quaternary structure, monomer. In terms of processing, N-glycosylated. Cuticle and fat body.

The protein localises to the secreted. Involved in the recognition of invading microorganisms. Binds specifically to beta-1,3-glucan and lipoteichoic acid and causes aggregation of invading microorganisms. Binding to beta-1,3-glucan activates the phenoloxidase cascade. In Manduca sexta (Tobacco hawkmoth), this protein is Beta-1,3-glucan-binding protein 2.